We begin with the raw amino-acid sequence, 463 residues long: Dipeptidyl peptidase 1 (463 aa).

Positions 1-24 are cleaved as a signal peptide; sequence MGVGPASLLAALLLLLSGDRAVRC. Asn29, Asn53, and Asn119 each carry an N-linked (GlcNAc...) asparagine glycan. 5 disulfide bridges follow: Cys30–Cys118, Cys54–Cys136, Cys255–Cys298, Cys291–Cys331, and Cys321–Cys337. A propeptide spanning residues 135 to 230 is cleaved from the precursor; sequence ACFTGKKVGT…TAEIQQKILH (96 aa). Cys258 is a catalytic residue. N-linked (GlcNAc...) asparagine glycosylation is present at Asn276. Positions 302 and 304 each coordinate chloride. Tyr347 is a binding site for chloride. Active-site residues include His405 and Asn427.

The protein belongs to the peptidase C1 family. In terms of assembly, tetramer of heterotrimers consisting of exclusion domain, heavy- and light chains. It depends on chloride as a cofactor.

Its subcellular location is the lysosome. It carries out the reaction Release of an N-terminal dipeptide, Xaa-Yaa-|-Zaa-, except when Xaa is Arg or Lys, or Yaa or Zaa is Pro.. Thiol protease. Has dipeptidylpeptidase activity. Active against a broad range of dipeptide substrates composed of both polar and hydrophobic amino acids. Proline cannot occupy the P1 position and arginine cannot occupy the P2 position of the substrate. Can act as both an exopeptidase and endopeptidase. Activates serine proteases such as elastase, cathepsin G and granzymes A and B. The protein is Dipeptidyl peptidase 1 (CTSC) of Macaca fascicularis (Crab-eating macaque).